Reading from the N-terminus, the 145-residue chain is MRVVIQRATSAEVVVEGRTVGSLTTPGLVVLVGVTGTDTATTAEKLAEKVWGLRILSEEKSASDLNAPLLVVSQFTLYASTRKGRRPSWSAAAPGPVSEPLVDHFVTHLRSLGAHVETGIFGADMKVGLVNDGPMTILIDTDDWH.

Residues 133-134 (GP) carry the Gly-cisPro motif, important for rejection of L-amino acids motif.

It belongs to the DTD family. In terms of assembly, homodimer.

The protein resides in the cytoplasm. The catalysed reaction is glycyl-tRNA(Ala) + H2O = tRNA(Ala) + glycine + H(+). It catalyses the reaction a D-aminoacyl-tRNA + H2O = a tRNA + a D-alpha-amino acid + H(+). Functionally, an aminoacyl-tRNA editing enzyme that deacylates mischarged D-aminoacyl-tRNAs. Also deacylates mischarged glycyl-tRNA(Ala), protecting cells against glycine mischarging by AlaRS. Acts via tRNA-based rather than protein-based catalysis; rejects L-amino acids rather than detecting D-amino acids in the active site. By recycling D-aminoacyl-tRNA to D-amino acids and free tRNA molecules, this enzyme counteracts the toxicity associated with the formation of D-aminoacyl-tRNA entities in vivo and helps enforce protein L-homochirality. The sequence is that of D-aminoacyl-tRNA deacylase from Cutibacterium acnes (strain DSM 16379 / KPA171202) (Propionibacterium acnes).